The primary structure comprises 192 residues: Inosine triphosphate pyrophosphatase (192 aa).

10–15 lines the ITP pocket; the sequence is TGNANK. Glutamate 46 serves as a coordination point for Mg(2+). Residues lysine 58, 74-75, lysine 91, 149-152, lysine 172, and 177-178 contribute to the ITP site; these read DT, FGWD, and HR.

The protein belongs to the HAM1 NTPase family. In terms of assembly, homodimer. It depends on Mg(2+) as a cofactor. The cofactor is Mn(2+).

The protein localises to the cytoplasm. Its subcellular location is the nucleus. The catalysed reaction is ITP + H2O = IMP + diphosphate + H(+). It carries out the reaction dITP + H2O = dIMP + diphosphate + H(+). It catalyses the reaction XTP + H2O = XMP + diphosphate + H(+). Its function is as follows. Pyrophosphatase that hydrolyzes non-canonical purine nucleotides such as inosine triphosphate (ITP), deoxyinosine triphosphate (dITP) or xanthosine 5'-triphosphate (XTP) to their respective monophosphate derivatives. The enzyme does not distinguish between the deoxy- and ribose forms. Probably excludes non-canonical purines from RNA and DNA precursor pools, thus preventing their incorporation into RNA and DNA and avoiding chromosomal lesions. The chain is Inosine triphosphate pyrophosphatase from Puccinia graminis f. sp. tritici (strain CRL 75-36-700-3 / race SCCL) (Black stem rust fungus).